Consider the following 288-residue polypeptide: Acetyl-coenzyme A carboxylase carboxyl transferase subunit beta (288 aa).

The region spanning 34–288 is the CoA carboxyltransferase N-terminal domain; the sequence is LFAKCPACKH…HLVAFHGGGQ (255 aa). Positions 38, 41, 56, and 59 each coordinate Zn(2+). The segment at 38 to 59 adopts a C4-type zinc-finger fold; that stretch reads CPACKHMIYKKDLGLAKICPTC.

The protein belongs to the AccD/PCCB family. In terms of assembly, acetyl-CoA carboxylase is a heterohexamer composed of biotin carboxyl carrier protein (AccB), biotin carboxylase (AccC) and two subunits each of ACCase subunit alpha (AccA) and ACCase subunit beta (AccD). Zn(2+) is required as a cofactor.

Its subcellular location is the cytoplasm. The enzyme catalyses N(6)-carboxybiotinyl-L-lysyl-[protein] + acetyl-CoA = N(6)-biotinyl-L-lysyl-[protein] + malonyl-CoA. The protein operates within lipid metabolism; malonyl-CoA biosynthesis; malonyl-CoA from acetyl-CoA: step 1/1. Component of the acetyl coenzyme A carboxylase (ACC) complex. Biotin carboxylase (BC) catalyzes the carboxylation of biotin on its carrier protein (BCCP) and then the CO(2) group is transferred by the transcarboxylase to acetyl-CoA to form malonyl-CoA. This Streptococcus dysgalactiae subsp. equisimilis (strain GGS_124) protein is Acetyl-coenzyme A carboxylase carboxyl transferase subunit beta.